Here is a 270-residue protein sequence, read N- to C-terminus: Thymidylate synthase (270 aa).

DUMP contacts are provided by residues R28 and 133-134; that span reads RR. C153 acts as the Nucleophile in catalysis. Residues 173-176, N184, and 214-216 each bind dUMP; these read RSAD and HIY. D176 contributes to the (6R)-5,10-methylene-5,6,7,8-tetrahydrofolate binding site. A269 lines the (6R)-5,10-methylene-5,6,7,8-tetrahydrofolate pocket.

The protein belongs to the thymidylate synthase family. Bacterial-type ThyA subfamily. As to quaternary structure, homodimer.

The protein localises to the cytoplasm. The catalysed reaction is dUMP + (6R)-5,10-methylene-5,6,7,8-tetrahydrofolate = 7,8-dihydrofolate + dTMP. It functions in the pathway pyrimidine metabolism; dTTP biosynthesis. In terms of biological role, catalyzes the reductive methylation of 2'-deoxyuridine-5'-monophosphate (dUMP) to 2'-deoxythymidine-5'-monophosphate (dTMP) while utilizing 5,10-methylenetetrahydrofolate (mTHF) as the methyl donor and reductant in the reaction, yielding dihydrofolate (DHF) as a by-product. This enzymatic reaction provides an intracellular de novo source of dTMP, an essential precursor for DNA biosynthesis. The chain is Thymidylate synthase from Corynebacterium diphtheriae (strain ATCC 700971 / NCTC 13129 / Biotype gravis).